The sequence spans 77 residues: Major pilus subunit operon regulatory protein (77 aa).

The protein to E.coli AfaF and DaaF.

Its function is as follows. Plays a role in the inhibition of methylation at the GATC1028 site located in the regulatory region upstream of the pabA promoter. May, in conjunction with the Mbf (methylation blocking factor), inhibits deoxyadenosine methylase from methylating the GATC1028 site. The sequence is that of Major pilus subunit operon regulatory protein (papI) from Escherichia coli.